The sequence spans 196 residues: Probable histone chaperone ASF1A (196 aa).

Basic and acidic residues predominate over residues 146-157 (VTKFPIDFHPEE). A disordered region spans residues 146–196 (VTKFPIDFHPEEEQTAATAAPPEQSDEQQPNVNGEAQVLPDQSVEPKPEES).

The protein belongs to the ASF1 family. As to quaternary structure, interacts with histone H3 and histone H4. Component of the HIRA complex made of UBN1, UBN2, ASF1A, CABIN1 and HIRA. Interacts with HIRA. In terms of tissue distribution, expressed in leaves and flower buds.

The protein localises to the nucleus. The protein resides in the nucleolus. In terms of biological role, histone chaperone that facilitates histone deposition and histone exchange and removal during nucleosome assembly and disassembly. While encoded by a region of the Arabidopsis thaliana genome that is homologous to the Brassica S-locus for self incompatibility, this protein may not play the same role in Arabidopsis thaliana. The polypeptide is Probable histone chaperone ASF1A (ASF1A) (Arabidopsis thaliana (Mouse-ear cress)).